We begin with the raw amino-acid sequence, 360 residues long: Peptide chain release factor 1 (360 aa).

Q237 carries the post-translational modification N5-methylglutamine.

This sequence belongs to the prokaryotic/mitochondrial release factor family. Methylated by PrmC. Methylation increases the termination efficiency of RF1.

The protein resides in the cytoplasm. Functionally, peptide chain release factor 1 directs the termination of translation in response to the peptide chain termination codons UAG and UAA. This Pseudomonas putida (strain ATCC 700007 / DSM 6899 / JCM 31910 / BCRC 17059 / LMG 24140 / F1) protein is Peptide chain release factor 1.